We begin with the raw amino-acid sequence, 178 residues long: Large ribosomal subunit protein uL6 (178 aa).

It belongs to the universal ribosomal protein uL6 family. Part of the 50S ribosomal subunit.

Functionally, this protein binds to the 23S rRNA, and is important in its secondary structure. It is located near the subunit interface in the base of the L7/L12 stalk, and near the tRNA binding site of the peptidyltransferase center. This is Large ribosomal subunit protein uL6 from Limosilactobacillus fermentum (strain NBRC 3956 / LMG 18251) (Lactobacillus fermentum).